The following is a 1231-amino-acid chain: Multifunctional 2-oxoglutarate metabolism enzyme (1231 aa).

The tract at residues 1–41 is 2-oxoglutarate dehydrogenase E1, N-terminal part; that stretch reads MANISSPFGQNEWLVEEMYRKFRDDPSSVDPSWHEFLVDYS. The interval 38-79 is disordered; the sequence is VDYSPEPTSQPAAEPTRVTSPLVAERAAAAAPQAPPKPADTA. The tract at residues 42 to 88 is linker; sequence PEPTSQPAAEPTRVTSPLVAERAAAAAPQAPPKPADTAAAGNGVVAA. The segment covering 58–69 has biased composition (low complexity); that stretch reads PLVAERAAAAAP. The tract at residues 89 to 337 is succinyltransferase E2; that stretch reads LAAKTAVPPP…LRTIHELLLS (249 aa). The active-site Proton acceptor; for succinyltransferase activity is His316. Residues 338–1231 are 2-oxoglutarate dehydrogenase E1, C-terminal part; that stretch reads DGFWDEVFRE…QQEILDEAFG (894 aa). Thiamine diphosphate is bound at residue Arg542. His581 and Ser606 together coordinate 2-oxoglutarate. Thiamine diphosphate is bound by residues Ser606, Leu608, Asp649, Ala650, Ala651, and Asn682. Residue Asp649 participates in Mg(2+) binding. The Mg(2+) site is built by Asn682 and Ile684. The stretch at 787 to 817 forms a coiled coil; that stretch reads DISMKEAEDALRDYQGQLERVFNEVRELEKH. His1024 serves as a coordination point for 2-oxoglutarate. Residues Thr1042, Arg1058, Lys1093, Ser1096, Gln1146, Arg1153, and Arg1154 each coordinate acetyl-CoA.

Belongs to the 2-oxoacid dehydrogenase family. Kgd subfamily. Homodimer. The 2-oxoglutarate dehydrogenase (ODH) complex contains multiple copies of three enzymatic components: 2-oxoglutarate dehydrogenase (E1), dihydrolipoamide succinyltransferase (E2) and lipoamide dehydrogenase (E3). Mg(2+) is required as a cofactor. It depends on thiamine diphosphate as a cofactor.

The enzyme catalyses glyoxylate + 2-oxoglutarate + H(+) = 2-hydroxy-3-oxoadipate + CO2. It catalyses the reaction 2-oxoglutarate + H(+) = succinate semialdehyde + CO2. The catalysed reaction is N(6)-[(R)-lipoyl]-L-lysyl-[protein] + 2-oxoglutarate + H(+) = N(6)-[(R)-S(8)-succinyldihydrolipoyl]-L-lysyl-[protein] + CO2. It carries out the reaction N(6)-[(R)-dihydrolipoyl]-L-lysyl-[protein] + succinyl-CoA = N(6)-[(R)-S(8)-succinyldihydrolipoyl]-L-lysyl-[protein] + CoA. It functions in the pathway carbohydrate metabolism; tricarboxylic acid cycle; succinate from 2-oxoglutarate (transferase route): step 1/2. It participates in carbohydrate metabolism; tricarboxylic acid cycle; succinyl-CoA from 2-oxoglutarate (dehydrogenase route): step 1/1. With respect to regulation, alpha-ketoglutarate dehydrogenase and decarboxylase activities are inhibited by unphosphorylated GarA, and allosterically activated by acetyl-CoA, the main substrate of the TCA cycle. Its function is as follows. Shows three enzymatic activities that share a first common step, the attack of thiamine-PP on 2-oxoglutarate (alpha-ketoglutarate, KG), leading to the formation of an enamine-thiamine-PP intermediate upon decarboxylation. Thus, displays KGD activity, catalyzing the decarboxylation from five-carbon 2-oxoglutarate to four-carbon succinate semialdehyde (SSA). Also catalyzes C-C bond formation between the activated aldehyde formed after decarboxylation of alpha-ketoglutarate and the carbonyl of glyoxylate (GLX), to yield 2-hydroxy-3-oxoadipate (HOA), which spontaneously decarboxylates to form 5-hydroxylevulinate (HLA). And is also a component of the 2-oxoglutarate dehydrogenase (ODH) complex, that catalyzes the overall conversion of 2-oxoglutarate to succinyl-CoA and CO(2). The KG decarboxylase and KG dehydrogenase reactions provide two alternative, tightly regulated, pathways connecting the oxidative and reductive branches of the TCA cycle. In Mycobacterium tuberculosis (strain ATCC 25177 / H37Ra), this protein is Multifunctional 2-oxoglutarate metabolism enzyme (kgd).